The following is a 151-amino-acid chain: Ribonuclease H (151 aa).

The RNase H type-1 domain maps to 5–146; sequence ALPHVTIFTD…ADQLAREGVA (142 aa). Residues Asp-14, Glu-52, Asp-74, and Asp-138 each contribute to the Mg(2+) site.

The protein belongs to the RNase H family. As to quaternary structure, monomer. Mg(2+) is required as a cofactor.

The protein resides in the cytoplasm. The catalysed reaction is Endonucleolytic cleavage to 5'-phosphomonoester.. Its function is as follows. Endonuclease that specifically degrades the RNA of RNA-DNA hybrids. This is Ribonuclease H from Nitrobacter hamburgensis (strain DSM 10229 / NCIMB 13809 / X14).